The chain runs to 103 residues: Large ribosomal subunit protein bL21 (103 aa).

It belongs to the bacterial ribosomal protein bL21 family. Part of the 50S ribosomal subunit. Contacts protein L20.

This protein binds to 23S rRNA in the presence of protein L20. This is Large ribosomal subunit protein bL21 from Thioalkalivibrio sulfidiphilus (strain HL-EbGR7).